The chain runs to 179 residues: MRYSTISSKYVNALLMVGKKVNKIEDYGELLKALCDVYVQFKDFFDNPAVKVWKKVETIKESFGTSIDKVFVNFVSLVFENKRQKFIPQIAAYYRYASIDVENKILVNVTTAEKLSSEELRAISEFVKKCVNRVPVIEEKIDESLIAGAVIEFSGKMIDVSVSGRLNKIAREVFSLRKG.

Belongs to the ATPase delta chain family. In terms of assembly, F-type ATPases have 2 components, F(1) - the catalytic core - and F(0) - the membrane proton channel. F(1) has five subunits: alpha(3), beta(3), gamma(1), delta(1), epsilon(1). F(0) has three main subunits: a(1), b(2) and c(10-14). The alpha and beta chains form an alternating ring which encloses part of the gamma chain. F(1) is attached to F(0) by a central stalk formed by the gamma and epsilon chains, while a peripheral stalk is formed by the delta and b chains.

It localises to the cell inner membrane. F(1)F(0) ATP synthase produces ATP from ADP in the presence of a proton or sodium gradient. F-type ATPases consist of two structural domains, F(1) containing the extramembraneous catalytic core and F(0) containing the membrane proton channel, linked together by a central stalk and a peripheral stalk. During catalysis, ATP synthesis in the catalytic domain of F(1) is coupled via a rotary mechanism of the central stalk subunits to proton translocation. Functionally, this protein is part of the stalk that links CF(0) to CF(1). It either transmits conformational changes from CF(0) to CF(1) or is implicated in proton conduction. The chain is ATP synthase subunit delta from Thermosipho melanesiensis (strain DSM 12029 / CIP 104789 / BI429).